Here is a 461-residue protein sequence, read N- to C-terminus: ATP synthase subunit beta 2 (461 aa).

151 to 158 (GGAGVGKT) is an ATP binding site.

This sequence belongs to the ATPase alpha/beta chains family. As to quaternary structure, F-type ATPases have 2 components, CF(1) - the catalytic core - and CF(0) - the membrane proton channel. CF(1) has five subunits: alpha(3), beta(3), gamma(1), delta(1), epsilon(1). CF(0) has three main subunits: a(1), b(2) and c(9-12). The alpha and beta chains form an alternating ring which encloses part of the gamma chain. CF(1) is attached to CF(0) by a central stalk formed by the gamma and epsilon chains, while a peripheral stalk is formed by the delta and b chains.

It localises to the cell inner membrane. It catalyses the reaction ATP + H2O + 4 H(+)(in) = ADP + phosphate + 5 H(+)(out). In terms of biological role, produces ATP from ADP in the presence of a proton gradient across the membrane. The catalytic sites are hosted primarily by the beta subunits. The chain is ATP synthase subunit beta 2 from Photobacterium profundum (strain SS9).